The primary structure comprises 523 residues: Tyrosine-protein kinase transforming protein Src (523 aa).

Residues 1–50 (MGSSKSKPKDPSQRRRSLEPPDSTHHGGFPASQTPNKTAAPDTHRTPSRS) are disordered. A lipid anchor (N-myristoyl glycine; by host) is attached at Gly-2. A compositionally biased stretch (basic and acidic residues) spans 7-25 (KPKDPSQRRRSLEPPDSTH). An SH3 domain is found at 71–139 (TSPQRAGALA…PSNYVAPSDS (69 aa)). One can recognise an SH2 domain in the interval 145–242 (WYFGKITRRE…GLCHRLTNVC (98 aa)). A Protein kinase domain is found at 264 to 514 (LRLEVKLGQG…TFEYLQAQLL (251 aa)). ATP is bound by residues 270–278 (LGQGYFGEV) and Lys-292. Asp-383 acts as the Proton acceptor in catalysis. Tyr-413 carries the post-translational modification Phosphotyrosine; by autocatalysis.

This sequence belongs to the protein kinase superfamily. Tyr protein kinase family. SRC subfamily. As to quaternary structure, homodimer. Post-translationally, the phosphorylated form is termed pp60v-src.

It carries out the reaction L-tyrosyl-[protein] + ATP = O-phospho-L-tyrosyl-[protein] + ADP + H(+). In terms of biological role, this phosphoprotein, required for both the initiation and the maintenance of neoplastic transformation, is a protein kinase that catalyzes the phosphorylation of tyrosine residues in vitro. This is Tyrosine-protein kinase transforming protein Src (V-SRC) from Gallus gallus (Chicken).